A 191-amino-acid chain; its full sequence is Protein GrpE (191 aa).

The protein belongs to the GrpE family. In terms of assembly, homodimer.

The protein localises to the cytoplasm. Participates actively in the response to hyperosmotic and heat shock by preventing the aggregation of stress-denatured proteins, in association with DnaK and GrpE. It is the nucleotide exchange factor for DnaK and may function as a thermosensor. Unfolded proteins bind initially to DnaJ; upon interaction with the DnaJ-bound protein, DnaK hydrolyzes its bound ATP, resulting in the formation of a stable complex. GrpE releases ADP from DnaK; ATP binding to DnaK triggers the release of the substrate protein, thus completing the reaction cycle. Several rounds of ATP-dependent interactions between DnaJ, DnaK and GrpE are required for fully efficient folding. This chain is Protein GrpE, found in Listeria welshimeri serovar 6b (strain ATCC 35897 / DSM 20650 / CCUG 15529 / CIP 8149 / NCTC 11857 / SLCC 5334 / V8).